Here is a 69-residue protein sequence, read N- to C-terminus: Cytochrome c oxidase subunit 8A, mitochondrial (69 aa).

A mitochondrion-targeting transit peptide spans 1–25 (MSVLTSLLLRGLTGSARWLPVPRAK). An SIFI-degron motif is present at residues 2–19 (SVLTSLLLRGLTGSARWL). The Mitochondrial matrix portion of the chain corresponds to 26-36 (VHSMPPEVELG). A helical transmembrane segment spans residues 37-60 (IMEKAIGLTSCFVSLFLPAGWILS). The Mitochondrial intermembrane portion of the chain corresponds to 61 to 69 (HLEDYKRPE).

The protein belongs to the cytochrome c oxidase VIII family. In terms of assembly, component of the cytochrome c oxidase (complex IV, CIV), a multisubunit enzyme composed of 14 subunits. The complex is composed of a catalytic core of 3 subunits MT-CO1, MT-CO2 and MT-CO3, encoded in the mitochondrial DNA, and 11 supernumerary subunits COX4I, COX5A, COX5B, COX6A, COX6B, COX6C, COX7A, COX7B, COX7C, COX8 and NDUFA4, which are encoded in the nuclear genome. The complex exists as a monomer or a dimer and forms supercomplexes (SCs) in the inner mitochondrial membrane with NADH-ubiquinone oxidoreductase (complex I, CI) and ubiquinol-cytochrome c oxidoreductase (cytochrome b-c1 complex, complex III, CIII), resulting in different assemblies (supercomplex SCI(1)III(2)IV(1) and megacomplex MCI(2)III(2)IV(2)). Post-translationally, in response to mitochondrial stress, the precursor protein is ubiquitinated by the SIFI complex in the cytoplasm before mitochondrial import, leading to its degradation. Within the SIFI complex, UBR4 initiates ubiquitin chain that are further elongated or branched by KCMF1.

The protein resides in the mitochondrion inner membrane. Its pathway is energy metabolism; oxidative phosphorylation. Functionally, component of the cytochrome c oxidase, the last enzyme in the mitochondrial electron transport chain which drives oxidative phosphorylation. The respiratory chain contains 3 multisubunit complexes succinate dehydrogenase (complex II, CII), ubiquinol-cytochrome c oxidoreductase (cytochrome b-c1 complex, complex III, CIII) and cytochrome c oxidase (complex IV, CIV), that cooperate to transfer electrons derived from NADH and succinate to molecular oxygen, creating an electrochemical gradient over the inner membrane that drives transmembrane transport and the ATP synthase. Cytochrome c oxidase is the component of the respiratory chain that catalyzes the reduction of oxygen to water. Electrons originating from reduced cytochrome c in the intermembrane space (IMS) are transferred via the dinuclear copper A center (CU(A)) of subunit 2 and heme A of subunit 1 to the active site in subunit 1, a binuclear center (BNC) formed by heme A3 and copper B (CU(B)). The BNC reduces molecular oxygen to 2 water molecules using 4 electrons from cytochrome c in the IMS and 4 protons from the mitochondrial matrix. The chain is Cytochrome c oxidase subunit 8A, mitochondrial (COX8A) from Macaca silenus (Lion-tailed macaque).